Consider the following 331-residue polypeptide: Cytoplasmic envelopment protein 1 (331 aa).

Belongs to the herpesviridae cytoplasmic envelopment protein 1 family. In terms of assembly, interacts with protein ORF7; this interaction localizes protein ORF53 to the host trans-Golgi network (TGN).

The protein localises to the virion. The protein resides in the virion tegument. It is found in the host cytoplasm. Its subcellular location is the host Golgi apparatus. Functionally, plays a critical role in cytoplasmic virus egress. Participates in the final step of tegumentation and envelope acquisition within the host cytoplasm. The polypeptide is Cytoplasmic envelopment protein 1 (ORF53) (Varicella-zoster virus (strain Dumas) (HHV-3)).